The sequence spans 253 residues: Non-homologous end joining protein Ku (253 aa).

The 184-residue stretch at 9–192 (ISFGLVNIPV…EITEEELELA (184 aa)) folds into the Ku domain.

The protein belongs to the prokaryotic Ku family. As to quaternary structure, homodimer. Interacts with LigD.

Its function is as follows. With LigD forms a non-homologous end joining (NHEJ) DNA repair enzyme, which repairs dsDNA breaks with reduced fidelity. Binds linear dsDNA with 5'- and 3'- overhangs but not closed circular dsDNA nor ssDNA. Recruits and stimulates the ligase activity of LigD. This chain is Non-homologous end joining protein Ku, found in Archaeoglobus fulgidus (strain ATCC 49558 / DSM 4304 / JCM 9628 / NBRC 100126 / VC-16).